Reading from the N-terminus, the 551-residue chain is C6 finger transcription factor imqK (551 aa).

The segment at residues cysteine 11–cysteine 53 is a DNA-binding region (zn(2)-C6 fungal-type). Disordered stretches follow at residues arginine 280–serine 302 and asparagine 351–alanine 378. Residues asparagine 351–serine 369 are compositionally biased toward low complexity.

Its subcellular location is the nucleus. In terms of biological role, C6 finger transcription factor that positively regulates the cluster that mediates the biosynthesis of imizoquins A to D, tripeptide-derived alkaloids that serve a protective role against oxidative stress that are essential for normal germination. The sequence is that of C6 finger transcription factor imqK from Aspergillus flavus (strain ATCC 200026 / FGSC A1120 / IAM 13836 / NRRL 3357 / JCM 12722 / SRRC 167).